Reading from the N-terminus, the 437-residue chain is Trigger factor (437 aa).

In terms of domain architecture, PPIase FKBP-type spans 164–249 (GDFAKFDFEG…LHEIQCKKIG (86 aa)).

The protein belongs to the FKBP-type PPIase family. Tig subfamily.

The protein resides in the cytoplasm. The catalysed reaction is [protein]-peptidylproline (omega=180) = [protein]-peptidylproline (omega=0). Involved in protein export. Acts as a chaperone by maintaining the newly synthesized protein in an open conformation. Functions as a peptidyl-prolyl cis-trans isomerase. The protein is Trigger factor of Campylobacter hominis (strain ATCC BAA-381 / DSM 21671 / CCUG 45161 / LMG 19568 / NCTC 13146 / CH001A).